We begin with the raw amino-acid sequence, 492 residues long: Putative cytochrome P450 136 (492 aa).

C439 contributes to the heme binding site.

It belongs to the cytochrome P450 family. The cofactor is heme.

The sequence is that of Putative cytochrome P450 136 (cyp136) from Mycobacterium tuberculosis (strain CDC 1551 / Oshkosh).